Consider the following 218-residue polypeptide: Small ribosomal subunit protein uS3 (218 aa).

The region spanning 38 to 106 is the KH type-2 domain; sequence IREYINKRLQ…REHINIVEIK (69 aa).

It belongs to the universal ribosomal protein uS3 family. In terms of assembly, part of the 30S ribosomal subunit. Forms a tight complex with proteins S10 and S14.

In terms of biological role, binds the lower part of the 30S subunit head. Binds mRNA in the 70S ribosome, positioning it for translation. In Geobacillus stearothermophilus (Bacillus stearothermophilus), this protein is Small ribosomal subunit protein uS3.